Here is a 1053-residue protein sequence, read N- to C-terminus: Focal adhesion kinase 1 (1053 aa).

The tract at residues 1–27 (MAAAYLDPNLNHTPSSSAKTHLGTGME) is disordered. Residues 10–19 (LNHTPSSSAK) are compositionally biased toward polar residues. The region spanning 35–355 (RVLKVFHYFE…GYCRLVNGAT (321 aa)) is the FERM domain. At Tyr-397 the chain carries Phosphotyrosine; by autocatalysis. Residue Tyr-407 is modified to Phosphotyrosine. The Protein kinase domain maps to 422–680 (IELGRCIGEG…ELKAQLSTIL (259 aa)). Residues 428-434 (IGEGQFG), Lys-454, and 500-502 (ELC) each bind ATP. Asp-546 serves as the catalytic Proton acceptor. Tyr-576 and Tyr-577 each carry phosphotyrosine; by SRC. The span at 686–697 (QQEERMRMESRR) shows a compositional bias: basic and acidic residues. Disordered stretches follow at residues 686 to 741 (QQEE…QPNH) and 843 to 892 (RGSI…LASL). At Tyr-863 the chain carries Phosphotyrosine. Ser-911 bears the Phosphoserine mark. Residue Tyr-926 is modified to Phosphotyrosine.

Belongs to the protein kinase superfamily. Tyr protein kinase family. FAK subfamily. In terms of assembly, interacts with ARHGAP26, GRB7, DCC, PIK3R1, PXN and SRC. Interacts with the ARP2/3 complex. In terms of processing, phosphorylated on tyrosine residues upon activation, e.g. upon integrin signaling. Tyr-397 is the major autophosphorylation site, but other kinases can also phosphorylate this residue. Phosphorylation at Tyr-397 promotes interaction with SRC and SRC family members, leading to phosphorylation at Tyr-576, Tyr-577 and at additional tyrosine residues. Isoform 2 is phosphorylated on serine or threonine residues, but apparently not on tyrosine residues.

Its subcellular location is the cell junction. The protein localises to the focal adhesion. It is found in the cell membrane. The protein resides in the cytoplasm. It localises to the perinuclear region. Its subcellular location is the cell cortex. The protein localises to the cytoskeleton. It is found in the microtubule organizing center. The protein resides in the centrosome. It localises to the nucleus. Its subcellular location is the cilium basal body. The enzyme catalyses L-tyrosyl-[protein] + ATP = O-phospho-L-tyrosyl-[protein] + ADP + H(+). Subject to autoinhibition, mediated by interactions between the FERM domain and the kinase domain. Activated by autophosphorylation at Tyr-397. This promotes interaction with SRC and phosphorylation at Tyr-576 and Tyr-577 in the kinase activation loop. Phosphorylation at Tyr-576 and Tyr-577 is required for maximal kinase activity. Inhibited by TAE226. In terms of biological role, non-receptor protein-tyrosine kinase that plays an essential role in regulating cell migration, adhesion, spreading, reorganization of the actin cytoskeleton, formation and disassembly of focal adhesions and cell protrusions, cell cycle progression, cell proliferation and apoptosis. Required for early embryonic development, embryonic angiogenesis, normal cardiomyocyte migration and proliferation, and normal heart development. Regulates axon growth and neuronal cell migration, axon branching and synapse formation; required for normal development of the nervous system. Plays a role in osteogenesis and differentiation of osteoblasts. Functions in integrin signal transduction, but also in signaling downstream of numerous growth factor receptors, G-protein coupled receptors (GPCR), ephrin receptors, netrin receptors and LDL receptors. Forms multisubunit signaling complexes with SRC and SRC family members upon activation; this leads to the phosphorylation of additional tyrosine residues, creating binding sites for scaffold proteins, effectors and substrates. Regulates numerous signaling pathways. Promotes activation of phosphatidylinositol 3-kinase and the AKT1 signaling cascade. Promotes activation of MAPK1/ERK2, MAPK3/ERK1 and the MAP kinase signaling cascade. Promotes localized and transient activation of guanine nucleotide exchange factors (GEFs) and GTPase-activating proteins (GAPs), and thereby modulates the activity of Rho family GTPases. Signaling via CAS family members mediates activation of RAC1. Regulates P53/TP53 activity and stability. Phosphorylates SRC; this increases SRC kinase activity. Isoform 2 (FRNK) does not contain a kinase domain and inhibits PTK2/FAK1 phosphorylation and signaling. The sequence is that of Focal adhesion kinase 1 (PTK2) from Gallus gallus (Chicken).